The chain runs to 102 residues: Pole-localizer protein TmaR (102 aa).

Positions 7–34 (IINQARRKNKLKRELQDNQKKIRDNQKR) form a coiled coil.

It belongs to the pole-localizer TmaR family.

The protein resides in the cytoplasm. Functionally, pole-localizer protein involved in the regulation of several cellular processes. The protein is Pole-localizer protein TmaR of Aliivibrio salmonicida (strain LFI1238) (Vibrio salmonicida (strain LFI1238)).